A 142-amino-acid chain; its full sequence is Galactose-6-phosphate isomerase subunit LacA (142 aa).

It belongs to the LacAB/RpiB family. Heteromultimeric protein consisting of LacA and LacB.

The catalysed reaction is aldehydo-D-galactose 6-phosphate = keto-D-tagatose 6-phosphate. It functions in the pathway carbohydrate metabolism; D-galactose 6-phosphate degradation; D-tagatose 6-phosphate from D-galactose 6-phosphate: step 1/1. This Staphylococcus epidermidis (strain ATCC 35984 / DSM 28319 / BCRC 17069 / CCUG 31568 / BM 3577 / RP62A) protein is Galactose-6-phosphate isomerase subunit LacA.